The chain runs to 543 residues: Protein P78/83 (543 aa).

3 disordered regions span residues 147-222 (QALP…QPAA), 235-325 (RNEK…SLSN), and 373-400 (MAKS…ANTP). The segment covering 182-221 (AAPPPPPSPVPNIPAPPPPPPPSMSELPPAPPMPTEPQPA) has biased composition (pro residues). The region spanning 226–246 (DRQQLLEAIRNEKNRTRLRPV) is the WH2 domain. Positions 271-321 (PKPPSASPPPPPPPPPPPAPPAPPPMVDLSSAPPPPPLVDLPSEMLPPPAP) are enriched in pro residues. Positions 375–384 (KSSSEATSND) are enriched in polar residues.

In terms of assembly, forms a complex with proteins C42 and E27. Interacts with host actin-related protein 2/3 complex. Interacts with protein Ac102.

It is found in the host cytoplasm. It localises to the host nucleus. Plays a role in the transport of the nucleocapsids from the cytoplasm toward the host nucleus together with the host actin-polymerizing Arp2/3 complex. This Lepidoptera (butterflies and moths) protein is Protein P78/83 (P61).